We begin with the raw amino-acid sequence, 105 residues long: Co-chaperonin GroES (105 aa).

The protein belongs to the GroES chaperonin family. In terms of assembly, heptamer of 7 subunits arranged in a ring. Interacts with the chaperonin GroEL.

It localises to the cytoplasm. Functionally, together with the chaperonin GroEL, plays an essential role in assisting protein folding. The GroEL-GroES system forms a nano-cage that allows encapsulation of the non-native substrate proteins and provides a physical environment optimized to promote and accelerate protein folding. GroES binds to the apical surface of the GroEL ring, thereby capping the opening of the GroEL channel. The sequence is that of Co-chaperonin GroES from Parvibaculum lavamentivorans (strain DS-1 / DSM 13023 / NCIMB 13966).